The primary structure comprises 164 residues: Putative protein ZNF321 (164 aa).

This chain is Putative protein ZNF321 (ZNF321P), found in Homo sapiens (Human).